A 459-amino-acid polypeptide reads, in one-letter code: Cysteine--tRNA ligase (459 aa).

Cys28 contributes to the Zn(2+) binding site. The 'HIGH' region signature appears at 30-40 (ITIYDLCHIGH). Residues Cys209, His234, and Glu238 each coordinate Zn(2+). The short motif at 266-270 (KMSKS) is the 'KMSKS' region element. Residue Lys269 coordinates ATP.

The protein belongs to the class-I aminoacyl-tRNA synthetase family. Monomer. It depends on Zn(2+) as a cofactor.

The protein resides in the cytoplasm. It carries out the reaction tRNA(Cys) + L-cysteine + ATP = L-cysteinyl-tRNA(Cys) + AMP + diphosphate. This Shewanella denitrificans (strain OS217 / ATCC BAA-1090 / DSM 15013) protein is Cysteine--tRNA ligase.